A 244-amino-acid chain; its full sequence is 3-oxoacyl-[acyl-carrier-protein] reductase FabG (244 aa).

NADP(+) is bound by residues 12–15 (GANQ) and threonine 37. 2 residues coordinate Ca(2+): lysine 50 and glycine 53. NADP(+) is bound by residues 59–60 (DL) and asparagine 86. Serine 138 is a binding site for substrate. Asparagine 145 provides a ligand contact to Ca(2+). Tyrosine 151 (proton acceptor) is an active-site residue. Residues 151 to 155 (YSASK) and isoleucine 184 contribute to the NADP(+) site. 2 residues coordinate Ca(2+): glutamine 233 and threonine 234.

This sequence belongs to the short-chain dehydrogenases/reductases (SDR) family. As to quaternary structure, homotetramer.

The enzyme catalyses a (3R)-hydroxyacyl-[ACP] + NADP(+) = a 3-oxoacyl-[ACP] + NADPH + H(+). The protein operates within lipid metabolism; fatty acid biosynthesis. Its function is as follows. Catalyzes the NADPH-dependent reduction of beta-ketoacyl-ACP substrates to beta-hydroxyacyl-ACP products, the first reductive step in the elongation cycle of fatty acid biosynthesis. In Buchnera aphidicola subsp. Schizaphis graminum (strain Sg), this protein is 3-oxoacyl-[acyl-carrier-protein] reductase FabG (fabG).